The primary structure comprises 160 residues: Ribosomal RNA large subunit methyltransferase H (160 aa).

Positions 76 and 108 each coordinate S-adenosyl-L-methionine.

It belongs to the RNA methyltransferase RlmH family. In terms of assembly, homodimer.

Its subcellular location is the cytoplasm. It carries out the reaction pseudouridine(1915) in 23S rRNA + S-adenosyl-L-methionine = N(3)-methylpseudouridine(1915) in 23S rRNA + S-adenosyl-L-homocysteine + H(+). Its function is as follows. Specifically methylates the pseudouridine at position 1915 (m3Psi1915) in 23S rRNA. The protein is Ribosomal RNA large subunit methyltransferase H of Rhodopseudomonas palustris (strain ATCC BAA-98 / CGA009).